Consider the following 67-residue polypeptide: DNA gyrase inhibitor YacG (67 aa).

Zn(2+) is bound by residues Cys-9, Cys-12, Cys-28, and Cys-32. The disordered stretch occupies residues 46-67 (RIPSSGDLNDSDDWSEQPLDRQ).

The protein belongs to the DNA gyrase inhibitor YacG family. As to quaternary structure, interacts with GyrB. It depends on Zn(2+) as a cofactor.

Functionally, inhibits all the catalytic activities of DNA gyrase by preventing its interaction with DNA. Acts by binding directly to the C-terminal domain of GyrB, which probably disrupts DNA binding by the gyrase. The chain is DNA gyrase inhibitor YacG from Erwinia tasmaniensis (strain DSM 17950 / CFBP 7177 / CIP 109463 / NCPPB 4357 / Et1/99).